Here is a 546-residue protein sequence, read N- to C-terminus: CTP synthase (546 aa).

The amidoligase domain stretch occupies residues 1-266 (MTTNYIFVTG…DDLVCTRFGI (266 aa)). Ser14 is a CTP binding site. Ser14 contacts UTP. ATP is bound by residues 15–20 (SLGKGI) and Asp72. Mg(2+) contacts are provided by Asp72 and Glu140. CTP is bound by residues 147-149 (DIE), 187-192 (KTKPTQ), and Lys223. Residues 187 to 192 (KTKPTQ) and Lys223 contribute to the UTP site. Residue 239-241 (KDV) participates in ATP binding. The Glutamine amidotransferase type-1 domain maps to 291-542 (TIGMVGKYIE…VKAAGQYSRG (252 aa)). Gly352 lines the L-glutamine pocket. Catalysis depends on Cys379, which acts as the Nucleophile; for glutamine hydrolysis. Residues 380–383 (LGMQ), Glu403, and Arg470 contribute to the L-glutamine site. Catalysis depends on residues His515 and Glu517.

This sequence belongs to the CTP synthase family. As to quaternary structure, homotetramer.

The enzyme catalyses UTP + L-glutamine + ATP + H2O = CTP + L-glutamate + ADP + phosphate + 2 H(+). The catalysed reaction is L-glutamine + H2O = L-glutamate + NH4(+). It carries out the reaction UTP + NH4(+) + ATP = CTP + ADP + phosphate + 2 H(+). Its pathway is pyrimidine metabolism; CTP biosynthesis via de novo pathway; CTP from UDP: step 2/2. Allosterically activated by GTP, when glutamine is the substrate; GTP has no effect on the reaction when ammonia is the substrate. The allosteric effector GTP functions by stabilizing the protein conformation that binds the tetrahedral intermediate(s) formed during glutamine hydrolysis. Inhibited by the product CTP, via allosteric rather than competitive inhibition. In terms of biological role, catalyzes the ATP-dependent amination of UTP to CTP with either L-glutamine or ammonia as the source of nitrogen. Regulates intracellular CTP levels through interactions with the four ribonucleotide triphosphates. In Vibrio parahaemolyticus serotype O3:K6 (strain RIMD 2210633), this protein is CTP synthase.